Here is a 521-residue protein sequence, read N- to C-terminus: Alkyl hydroperoxide reductase subunit F (521 aa).

Lys-53 is subject to N6-acetyllysine. 214 to 229 (DVLIVGSGPAGAAAAI) serves as a coordination point for FAD. Cys-345 and Cys-348 are oxidised to a cystine. Lys-354 bears the N6-acetyllysine mark. 357–371 (RVAVIGGGNSGVEAA) is a binding site for NAD(+). 478–488 (TNVKGVFAAGD) contributes to the FAD binding site.

The protein belongs to the class-II pyridine nucleotide-disulfide oxidoreductase family. Homodimer. FAD is required as a cofactor.

Serves to protect the cell against DNA damage by alkyl hydroperoxides. It can use either NADH or NADPH as electron donor for direct reduction of redox dyes or of alkyl hydroperoxides when combined with the AhpC protein. In Escherichia coli (strain K12), this protein is Alkyl hydroperoxide reductase subunit F (ahpF).